A 150-amino-acid polypeptide reads, in one-letter code: MRRAIFPGTFDPFTIGHYSVVQRTLTFMDEVVIGIGINENKNTYFPIEKRVEMIRKFYKDEPRIKVESYDCLTIDFARQVDAQFIVRGIRTVKDFEYEETIADINRKLAGIETILLFTEPELTCVSSTIVRELLGYNKDISMFIPKGMEM.

T9 contributes to the substrate binding site. ATP is bound by residues 9–10 (TF) and H17. Positions 41, 73, and 87 each coordinate substrate. ATP is bound by residues 88–90 (GIR), E98, and 122–128 (LTCVSST).

This sequence belongs to the bacterial CoaD family. In terms of assembly, homohexamer. It depends on Mg(2+) as a cofactor.

Its subcellular location is the cytoplasm. It catalyses the reaction (R)-4'-phosphopantetheine + ATP + H(+) = 3'-dephospho-CoA + diphosphate. It functions in the pathway cofactor biosynthesis; coenzyme A biosynthesis; CoA from (R)-pantothenate: step 4/5. In terms of biological role, reversibly transfers an adenylyl group from ATP to 4'-phosphopantetheine, yielding dephospho-CoA (dPCoA) and pyrophosphate. This chain is Phosphopantetheine adenylyltransferase, found in Bacteroides fragilis (strain ATCC 25285 / DSM 2151 / CCUG 4856 / JCM 11019 / LMG 10263 / NCTC 9343 / Onslow / VPI 2553 / EN-2).